The primary structure comprises 356 residues: Peptide-N(4)-(N-acetyl-beta-glucosaminyl)asparagine amidase (356 aa).

Zn(2+) is bound by residues cysteine 129, cysteine 132, cysteine 163, and cysteine 166. The active-site Nucleophile is cysteine 189. Active-site residues include histidine 216 and aspartate 233. Glutamate 236 contacts substrate. The tract at residues 300–356 (IRQNLSPSEKEELKREDEAEERELASYNADEPQEAQMPRQSGSVEWTKARGEGGSDD) is disordered. 2 stretches are compositionally biased toward basic and acidic residues: residues 307-316 (SEKEELKRED) and 346-356 (TKARGEGGSDD).

This sequence belongs to the transglutaminase-like superfamily. PNGase family. The cofactor is Zn(2+).

It is found in the cytoplasm. The catalysed reaction is Hydrolysis of an N(4)-(acetyl-beta-D-glucosaminyl)asparagine residue in which the glucosamine residue may be further glycosylated, to yield a (substituted) N-acetyl-beta-D-glucosaminylamine and a peptide containing an aspartate residue.. Functionally, specifically deglycosylates the denatured form of N-linked glycoproteins in the cytoplasm and assists their proteasome-mediated degradation. Cleaves the beta-aspartyl-glucosamine (GlcNAc) of the glycan and the amide side chain of Asn, converting Asn to Asp. Prefers proteins containing high-mannose over those bearing complex type oligosaccharides. Can recognize misfolded proteins in the endoplasmic reticulum that are exported to the cytosol to be destroyed and deglycosylate them, while it has no activity toward native proteins. Deglycosylation is a prerequisite for subsequent proteasome-mediated degradation of some, but not all, misfolded glycoproteins. The protein is Peptide-N(4)-(N-acetyl-beta-glucosaminyl)asparagine amidase (PNG1) of Yarrowia lipolytica (strain CLIB 122 / E 150) (Yeast).